The chain runs to 86 residues: Putative defensin-like protein 189 (86 aa).

The N-terminal stretch at 1-28 (MKMAKSANEIGFITCLVVFLVLTGQSNG) is a signal peptide. Disulfide bonds link Cys-39–Cys-85, Cys-52–Cys-71, Cys-57–Cys-80, and Cys-61–Cys-82.

It belongs to the DEFL family.

Its subcellular location is the secreted. This Arabidopsis thaliana (Mouse-ear cress) protein is Putative defensin-like protein 189.